The chain runs to 155 residues: Small ribosomal subunit protein uS7 (155 aa).

It belongs to the universal ribosomal protein uS7 family. Part of the 30S ribosomal subunit. Contacts proteins S9 and S11.

One of the primary rRNA binding proteins, it binds directly to 16S rRNA where it nucleates assembly of the head domain of the 30S subunit. Is located at the subunit interface close to the decoding center, probably blocks exit of the E-site tRNA. This Pelodictyon phaeoclathratiforme (strain DSM 5477 / BU-1) protein is Small ribosomal subunit protein uS7.